We begin with the raw amino-acid sequence, 367 residues long: Dual specificity protein phosphatase 1 (367 aa).

Positions 20–137 (RAAQCLLLDC…FSASCPELCS (118 aa)) constitute a Rhodanese domain. The Tyrosine-protein phosphatase domain maps to 173–314 (GPVEILPFLY…LLQFESQVLA (142 aa)). The Phosphocysteine intermediate role is filled by cysteine 258. Phosphoserine; by MAPK1 and MAPK3 occurs at positions 359 and 364.

The protein belongs to the protein-tyrosine phosphatase family. Non-receptor class dual specificity subfamily. Phosphorylation at Ser-359 and Ser-364 by MAPK1/ERK2 and MAPK3/ERK1 reduces its rate of degradation. In terms of processing, 'Lys-48'-linked polyubiquitinated by NEURL3, leading to proteasomal degradation. Expressed at high levels in the lung, liver placenta and pancreas. Moderate levels seen in the heart and skeletal muscle. Lower levels found in the brain and kidney.

The protein resides in the nucleus. It catalyses the reaction O-phospho-L-tyrosyl-[protein] + H2O = L-tyrosyl-[protein] + phosphate. It carries out the reaction O-phospho-L-seryl-[protein] + H2O = L-seryl-[protein] + phosphate. The enzyme catalyses O-phospho-L-threonyl-[protein] + H2O = L-threonyl-[protein] + phosphate. Functionally, dual specificity phosphatase that dephosphorylates MAP kinase MAPK1/ERK2 on both 'Thr-183' and 'Tyr-185', regulating its activity during the meiotic cell cycle. This Homo sapiens (Human) protein is Dual specificity protein phosphatase 1.